The primary structure comprises 316 residues: Pantothenate kinase (316 aa).

95 to 102 (GSVAVGKS) serves as a coordination point for ATP.

It belongs to the prokaryotic pantothenate kinase family.

It localises to the cytoplasm. It carries out the reaction (R)-pantothenate + ATP = (R)-4'-phosphopantothenate + ADP + H(+). Its pathway is cofactor biosynthesis; coenzyme A biosynthesis; CoA from (R)-pantothenate: step 1/5. This chain is Pantothenate kinase, found in Salmonella agona (strain SL483).